The chain runs to 64 residues: Prokaryotic ubiquitin-like protein Pup (64 aa).

Positions 20-58 (QELTLAASHVVSDVSEVDDLLDEIDGLLAENAEDFVTGF) are ARC ATPase binding. An Isoglutamyl lysine isopeptide (Glu-Lys) (interchain with K-? in acceptor proteins) cross-link involves residue E64.

This sequence belongs to the prokaryotic ubiquitin-like protein family. As to quaternary structure, strongly interacts with the proteasome-associated ATPase ARC through a hydrophobic interface; the interacting region of Pup lies in its C-terminal half. There is one Pup binding site per ARC hexamer ring.

The protein operates within protein degradation; proteasomal Pup-dependent pathway. Functionally, protein modifier that is covalently attached to lysine residues of substrate proteins, thereby targeting them for proteasomal degradation. The tagging system is termed pupylation. The polypeptide is Prokaryotic ubiquitin-like protein Pup (Rothia mucilaginosa (strain DY-18) (Stomatococcus mucilaginosus)).